A 161-amino-acid chain; its full sequence is Type IV major fimbrial protein FimA (161 aa).

Residues 1–7 (MKSLQKG) constitute a propeptide, leader sequence. Phenylalanine 8 is modified (N-methylphenylalanine). A helical membrane pass occupies residues 8 to 28 (FTLIELMIVVAIIGILAAFAI). The cysteines at positions 63 and 105 are disulfide-linked.

It belongs to the N-Me-Phe pilin family. As to quaternary structure, the pili are polar flexible filaments of about 5.4 nanometers diameter and 2.5 micrometers average length; they consist of only a single polypeptide chain arranged in a helical configuration of five subunits per turn in the assembled pilus.

It is found in the fimbrium. The protein localises to the membrane. Major component of the type IV fimbriae that plays an essential role in twitching motility, natural transformation, and protease secretion. This Dichelobacter nodosus (Bacteroides nodosus) protein is Type IV major fimbrial protein FimA (fimA).